Here is a 146-residue protein sequence, read N- to C-terminus: Leghemoglobin alpha (146 aa).

The Globin domain maps to 3 to 146; it reads AFTEKQEALV…LAAAIKKAYA (144 aa). Tyr26 and Tyr31 each carry nitrated tyrosine. Residue Ser46 coordinates heme b. The residue at position 46 (Ser46) is a Phosphoserine. His62 serves as a coordination point for O2. Heme b contacts are provided by His93 and Lys96. Tyr134 carries the post-translational modification Nitrated tyrosine.

Belongs to the plant globin family. In terms of assembly, monomer. In terms of processing, nitrated mainly at Tyr-31 and, to a lower extent, at Tyr-26 and Tyr-134, in effective nodules and particularly in hypoxic conditions; this mechanism may play a protective role in the symbiosis by buffering toxic peroxynitrite NO(2)(-). Nitration level decrease during nodule senescence. Phosphorylation at Ser-46 disrupts the molecular environment of its porphyrin ring oxygen binding pocket, thus leading to a reduced oxygen consumption and to the delivery of oxygen O(2) to symbiosomes. In terms of tissue distribution, root nodules.

It is found in the cytoplasm. The protein resides in the cytosol. Its subcellular location is the nucleus. Leghemoglobin that reversibly binds oxygen O(2) through a pentacoordinated heme iron. In root nodules, facilitates the diffusion of oxygen to the bacteroids while preventing the bacterial nitrogenase from being inactivated by buffering dioxygen, nitric oxide and carbon monoxide, and promoting the formation of reactive oxygen species (ROS, e.g. H(2)O(2)). This role is essential for symbiotic nitrogen fixation (SNF). In Phaseolus vulgaris (Kidney bean), this protein is Leghemoglobin alpha.